Consider the following 78-residue polypeptide: Acyl carrier protein (78 aa).

Residues 2 to 77 (SDIAERVKKI…DAIKYIGENM (76 aa)) enclose the Carrier domain. An O-(pantetheine 4'-phosphoryl)serine modification is found at serine 37.

This sequence belongs to the acyl carrier protein (ACP) family. Post-translationally, 4'-phosphopantetheine is transferred from CoA to a specific serine of apo-ACP by AcpS. This modification is essential for activity because fatty acids are bound in thioester linkage to the sulfhydryl of the prosthetic group.

Its subcellular location is the cytoplasm. It functions in the pathway lipid metabolism; fatty acid biosynthesis. Its function is as follows. Carrier of the growing fatty acid chain in fatty acid biosynthesis. This Magnetococcus marinus (strain ATCC BAA-1437 / JCM 17883 / MC-1) protein is Acyl carrier protein.